The following is a 184-amino-acid chain: ATP synthase subunit b (184 aa).

A helical membrane pass occupies residues 15-34 (VQPGLIFWTLVTFVIAAVVL).

The protein belongs to the ATPase B chain family. As to quaternary structure, F-type ATPases have 2 components, F(1) - the catalytic core - and F(0) - the membrane proton channel. F(1) has five subunits: alpha(3), beta(3), gamma(1), delta(1), epsilon(1). F(0) has three main subunits: a(1), b(2) and c(10-14). The alpha and beta chains form an alternating ring which encloses part of the gamma chain. F(1) is attached to F(0) by a central stalk formed by the gamma and epsilon chains, while a peripheral stalk is formed by the delta and b chains.

Its subcellular location is the cell inner membrane. Functionally, f(1)F(0) ATP synthase produces ATP from ADP in the presence of a proton or sodium gradient. F-type ATPases consist of two structural domains, F(1) containing the extramembraneous catalytic core and F(0) containing the membrane proton channel, linked together by a central stalk and a peripheral stalk. During catalysis, ATP synthesis in the catalytic domain of F(1) is coupled via a rotary mechanism of the central stalk subunits to proton translocation. Component of the F(0) channel, it forms part of the peripheral stalk, linking F(1) to F(0). In Myxococcus xanthus (strain DK1622), this protein is ATP synthase subunit b.